The sequence spans 63 residues: Conotoxin TeAr193 (63 aa).

The signal sequence occupies residues 1–22 (MRCLPVFVILLLLIASAPSVDA). Positions 23–48 (QPKTKDDIPQASFLDNAKRYLQVLES) are excised as a propeptide.

It belongs to the conotoxin T superfamily. In terms of processing, contains 2 disulfide bonds that can be either 'C1-C3, C2-C4' or 'C1-C4, C2-C3', since these disulfide connectivities have been observed for conotoxins with cysteine framework V (for examples, see AC P0DQQ7 and AC P81755). Expressed by the venom duct.

Its subcellular location is the secreted. The polypeptide is Conotoxin TeAr193 (Conus textile (Cloth-of-gold cone)).